Here is a 1333-residue protein sequence, read N- to C-terminus: Protein CLASP-1 (1333 aa).

Residues 168–206 (LIPQLCRLTNDPNSEVRDASTNCLVDLMVFGGKSIIAKI) form an HEAT 1 repeat. Over residues 269–305 (STTSFTSSARLSTPPRTNAPSLSPSPSTPSPLSLPAA) the composition is skewed to low complexity. Residues 269–311 (STTSFTSSARLSTPPRTNAPSLSPSPSTPSPLSLPAANGRSRD) form a disordered region. The stretch at 360–389 (SNSDVREKLETANSVLRNANEDWSKRANQL) forms a coiled coil. Disordered regions lie at residues 579 to 711 (QKML…HQTP) and 764 to 792 (TPPKETSPPASLYARGYGNGSNGSNNSSN). Over residues 601–611 (NQKQPQQPQQN) the composition is skewed to low complexity. A compositionally biased stretch (polar residues) spans 612-644 (ISQKFLSQRSASALDNKSQVLSIAKPQQSNPSR). Low complexity-rich tracts occupy residues 657–669 (SSTSSSFSAVRSS) and 686–707 (TNFNNNNNNNNKSSSSSPSTST). The HEAT 2 repeat unit spans residues 1266-1304 (VAPCFVSAYDSTSSSVRKCAVFGLVALVQRVGMPRLETH).

Belongs to the CLASP family.

It is found in the cytoplasm. The protein localises to the cytoskeleton. In terms of biological role, microtubule plus-end tracking protein that promotes the stabilization of dynamic microtubules. In Caenorhabditis briggsae, this protein is Protein CLASP-1.